The chain runs to 466 residues: Coproporphyrinogen III oxidase (466 aa).

Residues 9–14 (GAGITG), 34–35 (EA), Lys-42, 56–59 (GPES), Val-254, and 446–448 (VGL) each bind FAD.

This sequence belongs to the protoporphyrinogen/coproporphyrinogen oxidase family. Coproporphyrinogen III oxidase subfamily. The cofactor is FAD.

It is found in the cytoplasm. The enzyme catalyses coproporphyrinogen III + 3 O2 = coproporphyrin III + 3 H2O2. Its pathway is porphyrin-containing compound metabolism; protoheme biosynthesis. With respect to regulation, the generation of protoporphyrin IX, but not coproporphyrin III, is stimulated by heme-bound HemQ. This stimulatory effect is mediated by superoxide. Inhibited by acifluorfen analogs. In terms of biological role, involved in coproporphyrin-dependent heme b biosynthesis. Catalyzes the oxidation of coproporphyrinogen III to coproporphyrin III. Can also oxidize protoporphyrinogen IX. This Staphylococcus aureus (strain NCTC 8325 / PS 47) protein is Coproporphyrinogen III oxidase.